Consider the following 277-residue polypeptide: MEMO1 family protein Tpet_0837 (277 aa).

This sequence belongs to the MEMO1 family.

The polypeptide is MEMO1 family protein Tpet_0837 (Thermotoga petrophila (strain ATCC BAA-488 / DSM 13995 / JCM 10881 / RKU-1)).